We begin with the raw amino-acid sequence, 362 residues long: Biotin synthase (362 aa).

The segment at 14–39 (AQRTPEPLPPTSQGLARPSHDVVRGP) is disordered. The region spanning 87–316 (HKGGPAALCG…ARDILVCGGR (230 aa)) is the Radical SAM core domain. C105, C109, and C112 together coordinate [4Fe-4S] cluster. The [2Fe-2S] cluster site is built by C181 and C241.

It belongs to the radical SAM superfamily. Biotin synthase family. As to quaternary structure, homodimer. [4Fe-4S] cluster is required as a cofactor. The cofactor is [2Fe-2S] cluster.

The enzyme catalyses (4R,5S)-dethiobiotin + (sulfur carrier)-SH + 2 reduced [2Fe-2S]-[ferredoxin] + 2 S-adenosyl-L-methionine = (sulfur carrier)-H + biotin + 2 5'-deoxyadenosine + 2 L-methionine + 2 oxidized [2Fe-2S]-[ferredoxin]. Its pathway is cofactor biosynthesis; biotin biosynthesis; biotin from 7,8-diaminononanoate: step 2/2. Its function is as follows. Catalyzes the conversion of dethiobiotin (DTB) to biotin by the insertion of a sulfur atom into dethiobiotin via a radical-based mechanism. The chain is Biotin synthase from Nitratidesulfovibrio vulgaris (strain ATCC 29579 / DSM 644 / CCUG 34227 / NCIMB 8303 / VKM B-1760 / Hildenborough) (Desulfovibrio vulgaris).